We begin with the raw amino-acid sequence, 480 residues long: Membrane-bound lytic murein transglycosylase F (480 aa).

The N-terminal stretch at 1-15 (MKKLLFVLLTITLLA) is a signal peptide. The non-LT domain stretch occupies residues 16 to 259 (SCQKVSVEQT…HLNEKYFAHV (244 aa)). The segment at 260-480 (KRFDYVDTRA…QENLSGAQPQ (221 aa)) is LT domain. Residue glutamate 304 is part of the active site.

The protein in the N-terminal section; belongs to the bacterial solute-binding protein 3 family. It in the C-terminal section; belongs to the transglycosylase Slt family.

The protein resides in the cell outer membrane. The catalysed reaction is Exolytic cleavage of the (1-&gt;4)-beta-glycosidic linkage between N-acetylmuramic acid (MurNAc) and N-acetylglucosamine (GlcNAc) residues in peptidoglycan, from either the reducing or the non-reducing ends of the peptidoglycan chains, with concomitant formation of a 1,6-anhydrobond in the MurNAc residue.. Murein-degrading enzyme that degrades murein glycan strands and insoluble, high-molecular weight murein sacculi, with the concomitant formation of a 1,6-anhydromuramoyl product. Lytic transglycosylases (LTs) play an integral role in the metabolism of the peptidoglycan (PG) sacculus. Their lytic action creates space within the PG sacculus to allow for its expansion as well as for the insertion of various structures such as secretion systems and flagella. This chain is Membrane-bound lytic murein transglycosylase F, found in Shewanella sediminis (strain HAW-EB3).